Reading from the N-terminus, the 365-residue chain is Peptide chain release factor 2 (365 aa).

Glutamine 251 bears the N5-methylglutamine mark.

The protein belongs to the prokaryotic/mitochondrial release factor family. In terms of processing, methylated by PrmC. Methylation increases the termination efficiency of RF2.

It localises to the cytoplasm. Its function is as follows. Peptide chain release factor 2 directs the termination of translation in response to the peptide chain termination codons UGA and UAA. In Aliarcobacter butzleri (strain RM4018) (Arcobacter butzleri), this protein is Peptide chain release factor 2.